The following is a 259-amino-acid chain: Pimeloyl-[acyl-carrier protein] methyl ester esterase (259 aa).

The AB hydrolase-1 domain maps to 16–241 (FVMLHGWGMN…QSAHVPFISH (226 aa)). Residues Trp-22, 82–83 (SM), and 143–147 (FLLLQ) each bind substrate. Ser-82 serves as the catalytic Nucleophile. Active-site residues include Asp-207 and His-235. His-235 lines the substrate pocket.

The protein belongs to the AB hydrolase superfamily. Carboxylesterase BioH family. In terms of assembly, monomer.

It localises to the cytoplasm. The catalysed reaction is 6-carboxyhexanoyl-[ACP] methyl ester + H2O = 6-carboxyhexanoyl-[ACP] + methanol + H(+). It participates in cofactor biosynthesis; biotin biosynthesis. Its function is as follows. The physiological role of BioH is to remove the methyl group introduced by BioC when the pimeloyl moiety is complete. It allows to synthesize pimeloyl-ACP via the fatty acid synthetic pathway through the hydrolysis of the ester bonds of pimeloyl-ACP esters. This is Pimeloyl-[acyl-carrier protein] methyl ester esterase from Hamiltonella defensa subsp. Acyrthosiphon pisum (strain 5AT).